The primary structure comprises 510 residues: Bifunctional purine biosynthesis protein PurH (510 aa).

In terms of domain architecture, MGS-like spans 1–142 (MRALLSVSDK…KNFKDVLIVT (142 aa)).

Belongs to the PurH family.

It catalyses the reaction (6R)-10-formyltetrahydrofolate + 5-amino-1-(5-phospho-beta-D-ribosyl)imidazole-4-carboxamide = 5-formamido-1-(5-phospho-D-ribosyl)imidazole-4-carboxamide + (6S)-5,6,7,8-tetrahydrofolate. It carries out the reaction IMP + H2O = 5-formamido-1-(5-phospho-D-ribosyl)imidazole-4-carboxamide. It functions in the pathway purine metabolism; IMP biosynthesis via de novo pathway; 5-formamido-1-(5-phospho-D-ribosyl)imidazole-4-carboxamide from 5-amino-1-(5-phospho-D-ribosyl)imidazole-4-carboxamide (10-formyl THF route): step 1/1. Its pathway is purine metabolism; IMP biosynthesis via de novo pathway; IMP from 5-formamido-1-(5-phospho-D-ribosyl)imidazole-4-carboxamide: step 1/1. This Campylobacter concisus (strain 13826) protein is Bifunctional purine biosynthesis protein PurH.